The following is a 310-amino-acid chain: Olfactory receptor 5P80 (310 aa).

Residues 1 to 25 lie on the Extracellular side of the membrane; it reads MEPGNYTVVTEVILLGFTEDAIIRA. N-linked (GlcNAc...) asparagine glycosylation occurs at Asn5. A helical membrane pass occupies residues 26-46; the sequence is ILFIVFLIIYSVTLMGNASII. Residues 47 to 54 lie on the Cytoplasmic side of the membrane; that stretch reads MLIRRSPQ. A helical transmembrane segment spans residues 55–75; it reads LHTPMYLLLSHLAFVDIGYSS. The Extracellular segment spans residues 76–99; sequence SVTPIMLKGFLRKETFILVSGCVA. Cysteines 97 and 189 form a disulfide. A helical transmembrane segment spans residues 100–120; it reads QLCSVVTFGSTECFLLAAMAY. The Cytoplasmic portion of the chain corresponds to 121–133; sequence DRYVAICSPLLYA. The helical transmembrane segment at 134–154 threads the bilayer; the sequence is TQMSSTVCILLVGASYLGGCV. The Extracellular segment spans residues 155 to 196; sequence NAWTFTGCLLNLSFCRPNKVNHFFCDYSPLLKISCSHDFSSE. N-linked (GlcNAc...) asparagine glycosylation occurs at Asn165. Residues 197-217 traverse the membrane as a helical segment; that stretch reads VIPAISSGSIIVVTVFIIALS. Residues 218–237 lie on the Cytoplasmic side of the membrane; sequence YVYILVSILKMRSTEGRQKA. A helical transmembrane segment spans residues 238–258; sequence FSTCTSHLTAVTLFYGTITFI. Over 259–271 the chain is Extracellular; it reads YVMPKSSYSTDQN. The chain crosses the membrane as a helical span at residues 272-292; it reads KVVSVFYTVVIPMLNPIIYSL. Residues 293 to 310 are Cytoplasmic-facing; the sequence is RNKDVKEAMKKLMANTHH.

Belongs to the G-protein coupled receptor 1 family.

It is found in the cell membrane. In terms of biological role, potential odorant receptor. The sequence is that of Olfactory receptor 5P80 from Mus musculus (Mouse).